A 341-amino-acid polypeptide reads, in one-letter code: Phenylalanine--tRNA ligase alpha subunit (341 aa).

Glu256 is a Mg(2+) binding site.

Belongs to the class-II aminoacyl-tRNA synthetase family. Phe-tRNA synthetase alpha subunit type 1 subfamily. Tetramer of two alpha and two beta subunits. Mg(2+) is required as a cofactor.

It localises to the cytoplasm. The enzyme catalyses tRNA(Phe) + L-phenylalanine + ATP = L-phenylalanyl-tRNA(Phe) + AMP + diphosphate + H(+). The polypeptide is Phenylalanine--tRNA ligase alpha subunit (Chlamydia caviae (strain ATCC VR-813 / DSM 19441 / 03DC25 / GPIC) (Chlamydophila caviae)).